The primary structure comprises 202 residues: NADH-quinone oxidoreductase subunit B 2 (202 aa).

Cys-38, Cys-39, Cys-104, and Cys-133 together coordinate [4Fe-4S] cluster.

Belongs to the complex I 20 kDa subunit family. In terms of assembly, NDH-1 is composed of 14 different subunits. Subunits NuoB, C, D, E, F, and G constitute the peripheral sector of the complex. The cofactor is [4Fe-4S] cluster.

It is found in the cell inner membrane. The enzyme catalyses a quinone + NADH + 5 H(+)(in) = a quinol + NAD(+) + 4 H(+)(out). Functionally, NDH-1 shuttles electrons from NADH, via FMN and iron-sulfur (Fe-S) centers, to quinones in the respiratory chain. The immediate electron acceptor for the enzyme in this species is believed to be ubiquinone. Couples the redox reaction to proton translocation (for every two electrons transferred, four hydrogen ions are translocated across the cytoplasmic membrane), and thus conserves the redox energy in a proton gradient. This is NADH-quinone oxidoreductase subunit B 2 from Koribacter versatilis (strain Ellin345).